Here is a 457-residue protein sequence, read N- to C-terminus: 1-carboxybiuret hydrolase subunit AtzE (457 aa).

Residues Lys74 and Ser150 each act as charge relay system in the active site. Ser174 acts as the Acyl-ester intermediate in catalysis.

Belongs to the amidase family. In terms of assembly, heterotetramer consisting of 2 AtzE and 2 AtzG subunits.

The enzyme catalyses 1-carboxybiuret + H2O = urea-1,3-dicarboxylate + NH4(+). The protein operates within xenobiotic degradation; atrazine degradation. In terms of biological role, hydrolyzes 1-carboxybiuret to urea-1,3-dicarboxylate and NH(3). The polypeptide is 1-carboxybiuret hydrolase subunit AtzE (Pseudomonas sp. (strain ADP)).